The primary structure comprises 307 residues: MKVKTAVAIAGLTLKNPVLTASGTVGFGEEYAPYLDLAGLGALVVKTVTLKPRAGNPPPRITETPAGVINAVGLQNPGVEALVRDILPRLARFDVPVIVSIAGETVDEYARLAGRLDGVPGIAALEVNISCPNVKAGGIAFGTEPAMTAAVVRQVRENTRLPVIAKLSPNVTDIRTIALAAAGAGADALSLINTLSAMVIDVERRRPLLGNVFGGLSGPAVRPVAVRAVWQVYQAVELPLIGMGGIMTARDALEFILAGARAVAVGTANLVNPGAAAAVAADLEQYLTEQGIRDINELVGAAHRTGG.

Residues Ser22 and 46–47 (KT) contribute to the FMN site. Substrate-binding positions include Lys46, 70–74 (NAVGL), and Asn128. Asn128 is a binding site for FMN. Catalysis depends on Cys131, which acts as the Nucleophile. Residues Lys166 and Ile192 each coordinate FMN. 193–194 (NT) contacts substrate. FMN is bound by residues Gly218, 244–245 (GG), and 266–267 (GT).

The protein belongs to the dihydroorotate dehydrogenase family. Type 1 subfamily. As to quaternary structure, heterotetramer of 2 PyrK and 2 PyrD type B subunits. Requires FMN as cofactor.

The protein localises to the cytoplasm. It catalyses the reaction (S)-dihydroorotate + NAD(+) = orotate + NADH + H(+). Its pathway is pyrimidine metabolism; UMP biosynthesis via de novo pathway; orotate from (S)-dihydroorotate (NAD(+) route): step 1/1. Its function is as follows. Catalyzes the conversion of dihydroorotate to orotate with NAD(+) as electron acceptor. This chain is Dihydroorotate dehydrogenase B (NAD(+)), catalytic subunit (pyrD), found in Desulforudis audaxviator (strain MP104C).